The sequence spans 184 residues: TRAF-interacting protein with FHA domain-containing protein A (184 aa).

Thr-9 carries the post-translational modification Phosphothreonine. The FHA domain maps to 47 to 103 (VKFGRNSNMCQYTFQDKQVSRIQFVLQPFKQFNSSVLSFEIKNMSKKTSLMVDNQEL). A disordered region spans residues 152-184 (NNWPTQNPIPEDGMYSSYFTHRSSPSEMDENEL). Residues 168 to 177 (SYFTHRSSPS) show a composition bias toward polar residues.

The protein belongs to the TIFA family. In terms of assembly, homooligomer; homooligomerizes following phosphorylation at Thr-9. Interacts with IRAK1, TRAF2 and TRAF6. Interacts with TIFAB; binding to TIFAB inhibits TRAF6 activation, possibly by inducing a conformational change in TIFA. Interacts with ZCCHC11; binding to ZCCHC11 suppresses the TRAF6-dependent activation of NF-kappa-B. In terms of processing, phosphorylated at Thr-9 following detection of ADP-D-glycero-beta-D-manno-heptose (ADP-Heptose) by ALPK1. Phosphorylation at Thr-9 by ALPK1 leads to the formation of an intermolecular binding between the FHA domain and phosphorylated Thr-9, promoting TIFA oligomerization and TIFA-mediated NF-kappa-B activation. In terms of tissue distribution, highly expressed in the spleen and at lower levels in heart, brain, lung, liver, kidney and testes.

The protein resides in the cytoplasm. Its function is as follows. Adapter molecule that plays a key role in the activation of pro-inflammatory NF-kappa-B signaling following detection of bacterial pathogen-associated molecular pattern metabolites (PAMPs). Promotes activation of an innate immune response by inducing the oligomerization and polyubiquitination of TRAF6, which leads to the activation of TAK1 and IKK through a proteasome-independent mechanism. TIFA-dependent innate immune response is triggered by ADP-D-glycero-beta-D-manno-heptose (ADP-Heptose), a potent PAMP present in all Gram-negative and some Gram-positive bacteria: ADP-Heptose is recognized by ALPK1, which phosphorylates TIFA at Thr-9, leading to TIFA homooligomerization and subsequent activation of pro-inflammatory NF-kappa-B signaling. This Mus musculus (Mouse) protein is TRAF-interacting protein with FHA domain-containing protein A.